A 152-amino-acid chain; its full sequence is Transcriptional regulator MraZ (152 aa).

SpoVT-AbrB domains lie at 5-52 and 81-124; these read ASAI…PVQE and AHEC…DEAA.

This sequence belongs to the MraZ family. Forms oligomers.

Its subcellular location is the cytoplasm. It localises to the nucleoid. This is Transcriptional regulator MraZ from Shewanella piezotolerans (strain WP3 / JCM 13877).